Here is a 173-residue protein sequence, read N- to C-terminus: Co-chaperone protein HscB homolog (173 aa).

The region spanning 5–77 (SHFALFDLEP…SQRARYLLSL (73 aa)) is the J domain.

It belongs to the HscB family. Interacts with HscA and stimulates its ATPase activity.

Functionally, co-chaperone involved in the maturation of iron-sulfur cluster-containing proteins. Seems to help targeting proteins to be folded toward HscA. The protein is Co-chaperone protein HscB homolog of Azotobacter vinelandii (strain DJ / ATCC BAA-1303).